The primary structure comprises 149 residues: Thioredoxin-like protein 4B (149 aa).

The protein belongs to the DIM1 family. In terms of assembly, homodimer. Interacts with the U5-102 kDa protein subunit of the spliceosome.

Its subcellular location is the nucleus. Functionally, essential role in pre-mRNA splicing. Required in cell cycle progression for S/G(2) transition. This is Thioredoxin-like protein 4B (TXNL4B) from Homo sapiens (Human).